A 303-amino-acid chain; its full sequence is Glycine--tRNA ligase alpha subunit (303 aa).

The protein belongs to the class-II aminoacyl-tRNA synthetase family. In terms of assembly, tetramer of two alpha and two beta subunits.

Its subcellular location is the cytoplasm. The catalysed reaction is tRNA(Gly) + glycine + ATP = glycyl-tRNA(Gly) + AMP + diphosphate. The polypeptide is Glycine--tRNA ligase alpha subunit (Escherichia fergusonii (strain ATCC 35469 / DSM 13698 / CCUG 18766 / IAM 14443 / JCM 21226 / LMG 7866 / NBRC 102419 / NCTC 12128 / CDC 0568-73)).